The chain runs to 118 residues: Heavy metal-associated isoprenylated plant protein 47 (118 aa).

Positions 1–67 constitute an HMA domain; that stretch reads MRIKLSVNSE…KACHVTLETL (67 aa). Residue C115 is modified to Cysteine methyl ester. The S-farnesyl cysteine moiety is linked to residue C115. Positions 116-118 are cleaved as a propeptide — removed in mature form; the sequence is LVM.

The protein belongs to the HIPP family.

Its function is as follows. Heavy-metal-binding protein. The protein is Heavy metal-associated isoprenylated plant protein 47 of Arabidopsis thaliana (Mouse-ear cress).